The primary structure comprises 246 residues: Ribonuclease PH (246 aa).

Residues arginine 91 and 129–131 (GTR) contribute to the phosphate site.

This sequence belongs to the RNase PH family. Homohexameric ring arranged as a trimer of dimers.

It catalyses the reaction tRNA(n+1) + phosphate = tRNA(n) + a ribonucleoside 5'-diphosphate. Functionally, phosphorolytic 3'-5' exoribonuclease that plays an important role in tRNA 3'-end maturation. Removes nucleotide residues following the 3'-CCA terminus of tRNAs; can also add nucleotides to the ends of RNA molecules by using nucleoside diphosphates as substrates, but this may not be physiologically important. Probably plays a role in initiation of 16S rRNA degradation (leading to ribosome degradation) during starvation. This is Ribonuclease PH from Paraburkholderia xenovorans (strain LB400).